The following is a 341-amino-acid chain: Serine/threonine-protein kinase-like protein At5g23170 (341 aa).

In terms of domain architecture, Protein kinase spans 16-298 (FSPSKLIGKG…FGEITAEIVA (283 aa)). Residues 22-30 (IGKGSHGYV) and K51 contribute to the ATP site. Residues 52–75 (TPSSLSPSSPSSSSSSKSEQTKKL) form a disordered region. Over residues 53–69 (PSSLSPSSPSSSSSSKS) the composition is skewed to low complexity. D153 acts as the Proton acceptor in catalysis. Residues 311-332 (MSVLRRVVKLKRRKKRLRETLT) are a coiled coil.

It belongs to the protein kinase superfamily. Ser/Thr protein kinase family. As to expression, ubiquitous. Higher expression in mature stamina and pollen.

The catalysed reaction is L-seryl-[protein] + ATP = O-phospho-L-seryl-[protein] + ADP + H(+). It catalyses the reaction L-threonyl-[protein] + ATP = O-phospho-L-threonyl-[protein] + ADP + H(+). The polypeptide is Serine/threonine-protein kinase-like protein At5g23170 (Arabidopsis thaliana (Mouse-ear cress)).